We begin with the raw amino-acid sequence, 269 residues long: Ribonuclease HII (269 aa).

One can recognise an RNase H type-2 domain in the interval 83-269 (YLIAGVDEVG…HRMSFLTNIL (187 aa)). A divalent metal cation contacts are provided by Asp-89, Glu-90, and Asp-185.

Belongs to the RNase HII family. Requires Mn(2+) as cofactor. The cofactor is Mg(2+).

The protein localises to the cytoplasm. It catalyses the reaction Endonucleolytic cleavage to 5'-phosphomonoester.. Endonuclease that specifically degrades the RNA of RNA-DNA hybrids. The protein is Ribonuclease HII of Clostridium botulinum (strain Loch Maree / Type A3).